A 396-amino-acid polypeptide reads, in one-letter code: Cell division protein FtsZ 1 (396 aa).

The tract at residues 1 to 38 (MDSIVQDAIDEAEESEDSASEPADVAGGGGDTVPTGTM) is disordered. A compositionally biased stretch (acidic residues) spans 8–19 (AIDEAEESEDSA). GTP-binding positions include 61-65 (GAGSN), 148-150 (GTG), Glu-179, Arg-183, and Asp-226. Residues 358-396 (QIYGRNEAAEGDGPAQESTPEPEPEPQAGSEIEDIDYVE) form a disordered region.

Belongs to the FtsZ family. As to quaternary structure, homodimer. Polymerizes to form a dynamic ring structure in a strictly GTP-dependent manner. Interacts directly with several other division proteins.

It localises to the cytoplasm. Essential cell division protein that forms a contractile ring structure (Z ring) at the future cell division site. The regulation of the ring assembly controls the timing and the location of cell division. One of the functions of the FtsZ ring is to recruit other cell division proteins to the septum to produce a new cell wall between the dividing cells. Binds GTP and shows GTPase activity. The sequence is that of Cell division protein FtsZ 1 from Halobacterium salinarum (strain ATCC 29341 / DSM 671 / R1).